The chain runs to 289 residues: Light-independent protochlorophyllide reductase iron-sulfur ATP-binding protein (289 aa).

Residues 10 to 15 (GIGKST) and lysine 39 each bind ATP. Serine 14 provides a ligand contact to Mg(2+). The [4Fe-4S] cluster site is built by cysteine 95 and cysteine 129. 180–181 (NR) contacts ATP.

It belongs to the NifH/BchL/ChlL family. As to quaternary structure, homodimer. Protochlorophyllide reductase is composed of three subunits; ChlL, ChlN and ChlB. The cofactor is [4Fe-4S] cluster.

The protein resides in the plastid. It is found in the chloroplast. The catalysed reaction is chlorophyllide a + oxidized 2[4Fe-4S]-[ferredoxin] + 2 ADP + 2 phosphate = protochlorophyllide a + reduced 2[4Fe-4S]-[ferredoxin] + 2 ATP + 2 H2O. It participates in porphyrin-containing compound metabolism; chlorophyll biosynthesis (light-independent). Its function is as follows. Component of the dark-operative protochlorophyllide reductase (DPOR) that uses Mg-ATP and reduced ferredoxin to reduce ring D of protochlorophyllide (Pchlide) to form chlorophyllide a (Chlide). This reaction is light-independent. The L component serves as a unique electron donor to the NB-component of the complex, and binds Mg-ATP. This chain is Light-independent protochlorophyllide reductase iron-sulfur ATP-binding protein, found in Tetradesmus obliquus (Green alga).